A 713-amino-acid chain; its full sequence is UvrABC system protein B (713 aa).

Residues 35–421 enclose the Helicase ATP-binding domain; sequence RRIRAGEKDV…GDGFVEQIIR (387 aa). ATP is bound at residue 48-55; the sequence is GATGTGKS. A Beta-hairpin motif is present at residues 101–124; it reads YYDYYQPEAYVPQSDTYIEKDSSI. Positions 438–604 constitute a Helicase C-terminal domain; that stretch reads QIDDLVHEIR…PLRKKINDIV (167 aa). A disordered region spans residues 624 to 663; the sequence is QAKDGKGAKAPVPSLGGKAAAKGAKSAKGKAKETVPTDRP. Over residues 639-649 the composition is skewed to low complexity; sequence GGKAAAKGAKS. Residues 653–663 are compositionally biased toward basic and acidic residues; sequence KAKETVPTDRP. A UVR domain is found at 668 to 703; sequence AEEIEELTNRMRAAAADLQFEIAARLRDEVSEMKKE.

The protein belongs to the UvrB family. Forms a heterotetramer with UvrA during the search for lesions. Interacts with UvrC in an incision complex.

Its subcellular location is the cytoplasm. The UvrABC repair system catalyzes the recognition and processing of DNA lesions. A damage recognition complex composed of 2 UvrA and 2 UvrB subunits scans DNA for abnormalities. Upon binding of the UvrA(2)B(2) complex to a putative damaged site, the DNA wraps around one UvrB monomer. DNA wrap is dependent on ATP binding by UvrB and probably causes local melting of the DNA helix, facilitating insertion of UvrB beta-hairpin between the DNA strands. Then UvrB probes one DNA strand for the presence of a lesion. If a lesion is found the UvrA subunits dissociate and the UvrB-DNA preincision complex is formed. This complex is subsequently bound by UvrC and the second UvrB is released. If no lesion is found, the DNA wraps around the other UvrB subunit that will check the other stand for damage. The protein is UvrABC system protein B of Streptomyces avermitilis (strain ATCC 31267 / DSM 46492 / JCM 5070 / NBRC 14893 / NCIMB 12804 / NRRL 8165 / MA-4680).